We begin with the raw amino-acid sequence, 333 residues long: METYEKIELGIIVIILLILIESVILMTVEGWDFFTAFYTAVVTISTVGYGDYTPQTFLGKLSVIIYIFAGVGAVAYTMGNIASFFIEGHFRKYFRLRKMMDRIKKLNNHYIICGYGRLGKVIAEEFKKCNIPFVIIDSDEKLLEEALEKDPNLICIVGDATSDDILKKAKIEKAKGLISVVSSDAENVFITLSAKKLNPNIYIVAKAEKPSTLDKLIKAGADRAVCPYIVGGMEIARIAINPDIVEFIHSLVATEEDMEVRRYIVKNKELDNKLLKDSGIREKTGATILAVKKGDKTITSPPPDTVINIGDIIYAFGTKEQLEKLKRYVEGVE.

Topologically, residues 1–6 (METYEK) are cytoplasmic. A helical transmembrane segment spans residues 7 to 27 (IELGIIVIILLILIESVILMT). The Extracellular portion of the chain corresponds to 28–60 (VEGWDFFTAFYTAVVTISTVGYGDYTPQTFLGK). A Selectivity filter motif is present at residues 46-51 (TVGYGD). A helical membrane pass occupies residues 61–81 (LSVIIYIFAGVGAVAYTMGNI). Residues 82 to 333 (ASFFIEGHFR…KLKRYVEGVE (252 aa)) are Cytoplasmic-facing. The 123-residue stretch at 107 to 229 (NNHYIICGYG…GADRAVCPYI (123 aa)) folds into the RCK N-terminal domain. The RCK C-terminal domain occupies 246 to 331 (EFIHSLVATE…LEKLKRYVEG (86 aa)).

Homotetramer.

Its subcellular location is the cell membrane. Potassium channel protein. Seems to conduct potassium at low membrane potentials. The sequence is that of Potassium channel protein 1 from Methanocaldococcus jannaschii (strain ATCC 43067 / DSM 2661 / JAL-1 / JCM 10045 / NBRC 100440) (Methanococcus jannaschii).